The sequence spans 327 residues: Biotin synthase (327 aa).

One can recognise a Radical SAM core domain in the interval 48–278; that stretch reads YCGDGVGLCM…DRHITVCGGR (231 aa). Residues cysteine 66, cysteine 70, and cysteine 73 each coordinate [4Fe-4S] cluster. Serine 143 and cysteine 203 together coordinate [2Fe-2S] cluster.

This sequence belongs to the radical SAM superfamily. Biotin synthase family. Homodimer. The cofactor is [4Fe-4S] cluster. It depends on [2Fe-2S] cluster as a cofactor.

It catalyses the reaction (4R,5S)-dethiobiotin + (sulfur carrier)-SH + 2 reduced [2Fe-2S]-[ferredoxin] + 2 S-adenosyl-L-methionine = (sulfur carrier)-H + biotin + 2 5'-deoxyadenosine + 2 L-methionine + 2 oxidized [2Fe-2S]-[ferredoxin]. The protein operates within cofactor biosynthesis; biotin biosynthesis; biotin from 7,8-diaminononanoate: step 2/2. Its function is as follows. Catalyzes the conversion of dethiobiotin (DTB) to biotin by the insertion of a sulfur atom into dethiobiotin via a radical-based mechanism. The polypeptide is Biotin synthase (Syntrophotalea carbinolica (strain DSM 2380 / NBRC 103641 / GraBd1) (Pelobacter carbinolicus)).